A 309-amino-acid chain; its full sequence is MVKVYAPASSANMSVGFDVLGAAVTPVDGTLLGDNVTVEAAEQFSLHNLGRFASKLPTAPQENIVYQCWESFCQEIGKTVPVTMTLEKNMPIGSGLGSSACSVVAALVAMNEFCGKPLNETRMLALMGEMEGRISGSIHYDNVAPCYLGGMQLMIEENGIISQQVPGFDEWLWVLAYPGIKVSTAEARAILPAQYRRQDCIAHGRHLAGFIHACYTRQPQLAAKLMKDVIAEPYRTKLLPGFSEARQATMEIGAQACGISGSGPTLFALCDKPDTAQRVADWLGAHYLQNQEGFVHICRLDTAGARVVG.

An ATP-binding site is contributed by 91–101 (PIGSGLGSSAC).

This sequence belongs to the GHMP kinase family. Homoserine kinase subfamily.

It localises to the cytoplasm. The catalysed reaction is L-homoserine + ATP = O-phospho-L-homoserine + ADP + H(+). It participates in amino-acid biosynthesis; L-threonine biosynthesis; L-threonine from L-aspartate: step 4/5. Its function is as follows. Catalyzes the ATP-dependent phosphorylation of L-homoserine to L-homoserine phosphate. This is Homoserine kinase from Klebsiella pneumoniae (strain 342).